The chain runs to 66 residues: Trypsin inhibitor (66 aa).

5 cysteine pairs are disulfide-bonded: Cys5/Cys28, Cys16/Cys44, Cys19/Cys58, Cys21/Cys38, and Cys43/Cys64.

It is found in the secreted. The protein is Trypsin inhibitor of Ascaris suum (Pig roundworm).